Here is a 106-residue protein sequence, read N- to C-terminus: MNRIYACPVADVPEGEALRIDTSPVIALFNVGGEFYAINDRCSHGNASMSEGYLEDDATVECPLHAASFCLKTGKALCLPATDPLTTYPVHVEGSDIFIDLPEAQP.

Positions 4 to 99 (IYACPVADVP…VHVEGSDIFI (96 aa)) constitute a Rieske domain. Residues Cys42, His44, Cys62, and His65 each coordinate [2Fe-2S] cluster.

Belongs to the bacterial ring-hydroxylating dioxygenase ferredoxin component family. This dioxygenase system consists of four proteins: the two subunits of the hydroxylase component (HcaE and HcaF), a ferredoxin (HcaC) and a ferredoxin reductase (HcaD). Requires [2Fe-2S] cluster as cofactor.

The protein operates within aromatic compound metabolism; 3-phenylpropanoate degradation. Part of the multicomponent 3-phenylpropionate dioxygenase, that converts 3-phenylpropionic acid (PP) and cinnamic acid (CI) into 3-phenylpropionate-dihydrodiol (PP-dihydrodiol) and cinnamic acid-dihydrodiol (CI-dihydrodiol), respectively. This protein seems to be a 2Fe-2S ferredoxin. The polypeptide is 3-phenylpropionate/cinnamic acid dioxygenase ferredoxin subunit (Shigella boydii serotype 4 (strain Sb227)).